The sequence spans 84 residues: Small, acid-soluble spore protein gamma-type (84 aa).

Polar residues-rich tracts occupy residues 1–25 and 34–44; these read MANS…SAAG and ASETNAQQVRK. The interval 1-84 is disordered; sequence MANSNNFSKT…SAEQNKQQNS (84 aa). Repeats lie at residues 21–47 and 48–74; these read QSAA…KQNQ and QSAG…QQNQ. 2 stretches are compositionally biased toward low complexity: residues 45–57 and 71–84; these read QNQQ…GQFG and QQNQ…QQNS.

It belongs to the gamma-type SASP family.

Its function is as follows. SASP are proteins degraded in the first minutes of spore germination and provide amino acids for both new protein synthesis and metabolism. These proteins may be involved in dormant spore's high resistance to UV light. This is Small, acid-soluble spore protein gamma-type (sspE) from Bacillus subtilis (strain 168).